Here is a 467-residue protein sequence, read N- to C-terminus: UDP-N-acetylmuramate--L-alanine ligase (467 aa).

112 to 118 (GTHGKTT) lines the ATP pocket.

The protein belongs to the MurCDEF family.

It localises to the cytoplasm. It catalyses the reaction UDP-N-acetyl-alpha-D-muramate + L-alanine + ATP = UDP-N-acetyl-alpha-D-muramoyl-L-alanine + ADP + phosphate + H(+). Its pathway is cell wall biogenesis; peptidoglycan biosynthesis. In terms of biological role, cell wall formation. This chain is UDP-N-acetylmuramate--L-alanine ligase, found in Azoarcus sp. (strain BH72).